We begin with the raw amino-acid sequence, 348 residues long: Erythronate-4-phosphate dehydrogenase (348 aa).

Residues T46 and T67 each contribute to the substrate site. NAD(+) is bound at residue D147. Residue R209 is part of the active site. D233 serves as a coordination point for NAD(+). Residue E238 is part of the active site. Catalysis depends on H255, which acts as the Proton donor. G258 contacts NAD(+). Y259 contacts substrate.

The protein belongs to the D-isomer specific 2-hydroxyacid dehydrogenase family. PdxB subfamily. Homodimer.

It localises to the cytoplasm. The enzyme catalyses 4-phospho-D-erythronate + NAD(+) = (R)-3-hydroxy-2-oxo-4-phosphooxybutanoate + NADH + H(+). It functions in the pathway cofactor biosynthesis; pyridoxine 5'-phosphate biosynthesis; pyridoxine 5'-phosphate from D-erythrose 4-phosphate: step 2/5. In terms of biological role, catalyzes the oxidation of erythronate-4-phosphate to 3-hydroxy-2-oxo-4-phosphonooxybutanoate. The chain is Erythronate-4-phosphate dehydrogenase from Bacteroides fragilis (strain ATCC 25285 / DSM 2151 / CCUG 4856 / JCM 11019 / LMG 10263 / NCTC 9343 / Onslow / VPI 2553 / EN-2).